We begin with the raw amino-acid sequence, 241 residues long: Anthocyanidin 3-O-glucosyltransferase 4 (241 aa).

Glutamine 104, histidine 119, tryptophan 122, asparagine 123, serine 124, and glutamate 127 together coordinate UDP-alpha-D-glucose. Alanine 142 contributes to the an anthocyanidin binding site. UDP-alpha-D-glucose is bound by residues glutamate 143 and glutamine 144.

The protein belongs to the UDP-glycosyltransferase family. In terms of tissue distribution, faintly expressed in cotyledons, roots and leaves.

The catalysed reaction is an anthocyanidin + UDP-alpha-D-glucose + H(+) = an anthocyanidin 3-O-beta-D-glucoside + UDP. The protein operates within pigment biosynthesis; anthocyanin biosynthesis. In the presence of other necessary color factors, this glycosylation reaction allows the accumulation of anthocyanin pigments. In Manihot esculenta (Cassava), this protein is Anthocyanidin 3-O-glucosyltransferase 4 (GT4).